We begin with the raw amino-acid sequence, 44 residues long: Hyaluronidase CdtHya1 (44 aa).

Belongs to the glycosyl hydrolase 56 family. Monomer. Contains disulfide bonds. Post-translationally, glycosylated. Expressed by the venom gland.

Its subcellular location is the secreted. The catalysed reaction is Random hydrolysis of (1-&gt;4)-linkages between N-acetyl-beta-D-glucosamine and D-glucuronate residues in hyaluronate.. Functionally, snake venom endo-hyaluronidase that degrades hyaluronan to smaller oligosaccharide fragments. In venom, it is not toxic by itself, but increases the diffusion of other venom proteins such as crotoxin (a neurotoxic and myotoxic PLA2) by degrading the extracellular matrix. In addition, it displays antiedematogenic activity, since it significantly diminishes the oedematogenic activity of crotoxin (probably by direct substrate hydrolysis, since hyaluronan possesses strong water-binding capacity). The protein is Hyaluronidase CdtHya1 of Crotalus durissus terrificus (South American rattlesnake).